The sequence spans 188 residues: Large ribosomal subunit protein bL32m (188 aa).

Zn(2+) is bound by residues Cys-110, Cys-113, Cys-123, and Cys-126. The tract at residues 164–188 (TPSEQDQGKRIIERDRKRPSWFTQN) is disordered. Residues 169–181 (DQGKRIIERDRKR) are compositionally biased toward basic and acidic residues.

This sequence belongs to the bacterial ribosomal protein bL32 family. Component of the mitochondrial large ribosomal subunit (mt-LSU). Mature mammalian 55S mitochondrial ribosomes consist of a small (28S) and a large (39S) subunit. The 28S small subunit contains a 12S ribosomal RNA (12S mt-rRNA) and 30 different proteins. The 39S large subunit contains a 16S rRNA (16S mt-rRNA), a copy of mitochondrial valine transfer RNA (mt-tRNA(Val)), which plays an integral structural role, and 52 different proteins. bL32m has a zinc binding site. Post-translationally, MRPL32 precursor is processed by the m-AAA protease (composed of AFG3L2 and SPG7), which cleaves the N-terminal transit peptide. Cleavage by the m-AAA protease takes place prior to assembly into the large subunit, an essential step for mitochondrial ribosome (mitoribosome) assembly. Proper processing by the m-AAA protease is dependent on the zinc-binding region within the tightly folded C-terminal domain of MRPL32: zinc-dependent folding halts degradation initiated from the N-terminus and triggers the release of mature MRPL32.

Its subcellular location is the mitochondrion. In terms of biological role, component of the mitochondrial large ribosomal subunit (mt-LSU). The mitochondrial ribosome (mitoribosome) is a large ribonucleoprotein complex responsible for the synthesis of proteins inside mitochondria. This is Large ribosomal subunit protein bL32m (MRPL32) from Homo sapiens (Human).